Reading from the N-terminus, the 299-residue chain is Ciliary microtubule inner protein 2B (299 aa).

This sequence belongs to the CIMIP2 family. As to expression, expressed in airway epithelial cells.

It localises to the cytoplasm. The protein localises to the cytoskeleton. Its subcellular location is the cilium axoneme. Its function is as follows. Microtubule inner protein (MIP) part of the dynein-decorated doublet microtubules (DMTs) in cilia axoneme, which is required for motile cilia beating. The sequence is that of Ciliary microtubule inner protein 2B (cimip2b) from Danio rerio (Zebrafish).